The following is a 143-amino-acid chain: Large ribosomal subunit protein uL11 (143 aa).

It belongs to the universal ribosomal protein uL11 family. Part of the ribosomal stalk of the 50S ribosomal subunit. Interacts with L10 and the large rRNA to form the base of the stalk. L10 forms an elongated spine to which L12 dimers bind in a sequential fashion forming a multimeric L10(L12)X complex. One or more lysine residues are methylated.

Forms part of the ribosomal stalk which helps the ribosome interact with GTP-bound translation factors. The polypeptide is Large ribosomal subunit protein uL11 (Pseudomonas fluorescens (strain SBW25)).